A 283-amino-acid polypeptide reads, in one-letter code: 2,3,4,5-tetrahydropyridine-2,6-dicarboxylate N-succinyltransferase (283 aa).

Residues Arg-107 and Asp-144 each coordinate substrate.

The protein belongs to the transferase hexapeptide repeat family. In terms of assembly, homotrimer.

The protein localises to the cytoplasm. The enzyme catalyses (S)-2,3,4,5-tetrahydrodipicolinate + succinyl-CoA + H2O = (S)-2-succinylamino-6-oxoheptanedioate + CoA. It participates in amino-acid biosynthesis; L-lysine biosynthesis via DAP pathway; LL-2,6-diaminopimelate from (S)-tetrahydrodipicolinate (succinylase route): step 1/3. The polypeptide is 2,3,4,5-tetrahydropyridine-2,6-dicarboxylate N-succinyltransferase (Rhodospirillum rubrum (strain ATCC 11170 / ATH 1.1.1 / DSM 467 / LMG 4362 / NCIMB 8255 / S1)).